The following is a 260-amino-acid chain: Thiamine thiazole synthase (260 aa).

NAD(+) contacts are provided by residues A36, 55–56 (EQ), G63, and 154–156 (HVD). Fe cation-binding residues include D156 and H171. Position 224 (M224) interacts with NAD(+). R234 is a glycine binding site.

This sequence belongs to the THI4 family. Homooctamer; tetramer of dimers. The cofactor is Fe(2+).

It catalyses the reaction hydrogen sulfide + glycine + NAD(+) = ADP-5-ethyl-4-methylthiazole-2-carboxylate + nicotinamide + 3 H2O + H(+). The protein operates within cofactor biosynthesis; thiamine diphosphate biosynthesis. Its function is as follows. Involved in the biosynthesis of the thiazole moiety of thiamine. Catalyzes the conversion of NAD and glycine to adenosine diphosphate 5-(2-hydroxyethyl)-4-methylthiazole-2-carboxylate (ADT), an adenylated thiazole intermediate, using free sulfide as a source of sulfur. This is Thiamine thiazole synthase from Methanosarcina acetivorans (strain ATCC 35395 / DSM 2834 / JCM 12185 / C2A).